We begin with the raw amino-acid sequence, 103 residues long: Small ribosomal subunit protein uS14c (103 aa).

Residues 34-56 (KVSPLSLSEKTKMREKLQSLPRN) are disordered.

This sequence belongs to the universal ribosomal protein uS14 family. Part of the 30S ribosomal subunit.

It is found in the plastid. It localises to the chloroplast. Functionally, binds 16S rRNA, required for the assembly of 30S particles. This Triticum aestivum (Wheat) protein is Small ribosomal subunit protein uS14c.